The chain runs to 86 residues: Conotoxin Ec15a (86 aa).

The signal sequence occupies residues methionine 1 to glycine 23. Positions glutamate 24–arginine 49 are excised as a propeptide. Glutamine 50 is subject to Pyrrolidone carboxylic acid.

Belongs to the conotoxin O2 superfamily. In terms of processing, contains 4 disulfide bonds. As to expression, expressed by the venom duct.

The protein localises to the secreted. This chain is Conotoxin Ec15a, found in Conus emaciatus (False virgin cone).